The following is a 203-amino-acid chain: Bone marrow stromal antigen 2 (203 aa).

Over methionine 1 to cysteine 26 the chain is Cytoplasmic. A helical; Signal-anchor for type II membrane protein transmembrane segment spans residues leucine 27 to valine 47. At lysine 48–serine 183 the chain is on the extracellular side. 2 N-linked (GlcNAc...) asparagine glycosylation sites follow: asparagine 66 and asparagine 93. The stretch at asparagine 66 to threonine 178 forms a coiled coil. Residue serine 183 is the site of GPI-anchor amidated serine attachment. The propeptide at alanine 184–phenylalanine 203 is removed in mature form.

In terms of assembly, parallel homodimer; disulfide-linked. May form homotetramers under reducing conditions. Isoform 1 and isoform 2 form homodimers and also heterodimers with each other. Dimerization is essential for its antiviral activity. Interacts (via cytoplasmic domain) with ARHGAP44. Interacts with MMP14 (via C-terminal cytoplasmic tail). Interacts with LILRA4/ILT7. Interacts with RNF115. Post-translationally, the GPI anchor is essential for its antiviral activity.

The protein localises to the golgi apparatus. It localises to the trans-Golgi network. The protein resides in the cell membrane. Its subcellular location is the late endosome. It is found in the membrane raft. The protein localises to the cytoplasm. It localises to the apical cell membrane. IFN-induced antiviral host restriction factor which efficiently blocks the release of diverse mammalian enveloped viruses by directly tethering nascent virions to the membranes of infected cells. Acts as a direct physical tether, holding virions to the cell membrane and linking virions to each other. The tethered virions can be internalized by endocytosis and subsequently degraded or they can remain on the cell surface. In either case, their spread as cell-free virions is restricted. Its target viruses belong to diverse families, including retroviridae: human immunodeficiency virus type 1 (HIV-1), mouse mammary tumor virus (MMTV) and murine leukemia virus (MLV), filoviridae: ebola virus (EBOV), arenaviridae: lassa virus (LASV), and rhabdoviridae: vesicular stomatitis virus (VSV). Can inhibit cell surface proteolytic activity of MMP14 causing decreased activation of MMP15 which results in inhibition of cell growth and migration. Can stimulate signaling by LILRA4/ILT7 and consequently provide negative feedback to the production of IFN by plasmacytoid dendritic cells in response to viral infection. Plays a role in the organization of the subapical actin cytoskeleton in polarized epithelial cells. This chain is Bone marrow stromal antigen 2 (Bst2), found in Cricetulus griseus (Chinese hamster).